A 256-amino-acid polypeptide reads, in one-letter code: Phosphonates import ATP-binding protein PhnC (256 aa).

An ABC transporter domain is found at 3–247 (LELKNISKTY…VLHKEIFTNV (245 aa)). 36–43 (GLSGAGKS) contacts ATP.

This sequence belongs to the ABC transporter superfamily. Phosphonates importer (TC 3.A.1.9.1) family. The complex is composed of two ATP-binding proteins (PhnC), two transmembrane proteins (PhnE) and a solute-binding protein (PhnD).

The protein localises to the cell inner membrane. The enzyme catalyses phosphonate(out) + ATP + H2O = phosphonate(in) + ADP + phosphate + H(+). In terms of biological role, part of the ABC transporter complex PhnCDE involved in phosphonates import. Responsible for energy coupling to the transport system. This is Phosphonates import ATP-binding protein PhnC from Treponema denticola (strain ATCC 35405 / DSM 14222 / CIP 103919 / JCM 8153 / KCTC 15104).